The following is a 479-amino-acid chain: Cardiolipin synthase A (479 aa).

The next 2 membrane-spanning stretches (helical) occupy residues 8 to 28 (FFGYLIGLIHLLGIIAALHAV) and 38 to 58 (IAWALSLLFIPYFTLIPYLIF). 2 consecutive PLD phosphodiesterase domains span residues 218 to 245 (VNFRNHRKIVVVDGLRGFLGGHNVGDEY) and 392 to 419 (QPGFLHQKVVLVDDEVSAIGSANLDNRS). Residues His-223, Lys-225, Asp-230, His-397, Lys-399, and Asp-404 contribute to the active site.

The protein belongs to the phospholipase D family. Cardiolipin synthase subfamily. ClsA sub-subfamily.

The protein localises to the cell inner membrane. The catalysed reaction is 2 a 1,2-diacyl-sn-glycero-3-phospho-(1'-sn-glycerol) = a cardiolipin + glycerol. Functionally, catalyzes the reversible phosphatidyl group transfer from one phosphatidylglycerol molecule to another to form cardiolipin (CL) (diphosphatidylglycerol) and glycerol. This is Cardiolipin synthase A from Pseudomonas entomophila (strain L48).